Here is a 438-residue protein sequence, read N- to C-terminus: MQAEDRSQFGSAAEMLSEQTAALGTGWESMNVQLDGAEPQVERGSQEERPWRTVPGPLEHLCCDLEEEPQSLQEKAQSAPWVPAIPQEGNTGDWEMAAALLAAGSQGLVTIKDVSLCFSQEEWRSLDPSQTDFYGEYVMQENCGIVVSLRFPIPKLDMLSQLEGGEEQWVPDPQDLEERDILRVTYTGDGSEHEGDTPELEAEPPRMLSSVSEDTVLWNPEHDESWDSMPSSSRGMLLGPPFLQEDSFSNLLCSTEMDSLLRPHTCPQCGKQFVWGSHLARHQQTHTGERPYSCLKCEKTFGRRHHLIRHQKTHLHDKTSRCSECGKNFRCNSHLASHQRVHAEGKSCKGQEVGESPGTRKRQRAPPVPKCHVCTECGKSFGRRHHLVRHWLTHTGEKPFQCPRCEKSFGRKHHLDRHLLTHQGQSPRNSWDRGTSVF.

Residues 1 to 53 (MQAEDRSQFGSAAEMLSEQTAALGTGWESMNVQLDGAEPQVERGSQEERPWRT) are disordered. The span at 17–32 (SEQTAALGTGWESMNV) shows a compositional bias: polar residues. Residues 40 to 51 (QVERGSQEERPW) show a composition bias toward basic and acidic residues. Positions 109 to 181 (VTIKDVSLCF…DPQDLEERDI (73 aa)) constitute a KRAB domain. Residues 171 to 265 (PDPQDLEERD…EMDSLLRPHT (95 aa)) are transactivation. At serine 191 the chain carries Phosphoserine. 3 C2H2-type zinc fingers span residues 264–286 (HTCPQCGKQFVWGSHLARHQQTH), 292–314 (YSCLKCEKTFGRRHHLIRHQKTH), and 320–342 (SRCSECGKNFRCNSHLASHQRVH). The interval 345-367 (GKSCKGQEVGESPGTRKRQRAPP) is disordered. 2 consecutive C2H2-type zinc fingers follow at residues 372–394 (HVCTECGKSFGRRHHLVRHWLTH) and 400–422 (FQCPRCEKSFGRKHHLDRHLLTH). Positions 418–438 (HLLTHQGQSPRNSWDRGTSVF) are disordered. Polar residues predominate over residues 422–438 (HQGQSPRNSWDRGTSVF). Phosphoserine is present on serine 426.

It belongs to the krueppel C2H2-type zinc-finger protein family. As to expression, highly expressed in skeletal muscle, moderate expression in heart, liver, and pancreas, lower expression in placenta, no expression seen in brain, lung, and kidney.

The protein localises to the nucleus. Functionally, transcriptional activator. Activates transcriptional activities of SRE and AP-1. This chain is Zinc finger protein 641 (ZNF641), found in Homo sapiens (Human).